The following is a 247-amino-acid chain: TLC domain-containing protein 1 (247 aa).

A signal peptide spans 1 to 27; it reads MPLLLHPAWPLLLGATLTFRALRRVLC. The Extracellular segment spans residues 28–46; sequence RLPLPAHVQTDPLRTWRWH. The 195-residue stretch at 40 to 234 folds into the TLC domain; the sequence is LRTWRWHNLL…LLRSDFCPER (195 aa). A helical transmembrane segment spans residues 47 to 67; sequence NLLVSFTHSIVSGIWALLCIW. Residues 68 to 83 are Cytoplasmic-facing; that stretch reads QTPEMLVEIETAWSVC. Residues 84-104 form a helical membrane-spanning segment; the sequence is GYLLVCFSAGYFIHDTVDIVV. At 105–123 the chain is on the extracellular side; the sequence is SRQTRASWEYLVHHVMAMG. Positions 124–144 form an intramembrane region, helical; sequence AFFSGIFWKRFVGGGVLTLLV. Topologically, residues 145 to 173 are extracellular; it reads EVSNIFLTLRMMMKINNAQDILLYKVNKY. A helical transmembrane segment spans residues 174–194; the sequence is VNLVMYFLFRLAPQAYLTKFF. Residues 195–201 lie on the Cytoplasmic side of the membrane; that stretch reads LQYAGQR. Residues 202 to 222 traverse the membrane as a helical segment; the sequence is TLGTFLLSILLMLDVMILIYF. Residues 223–247 lie on the Extracellular side of the membrane; the sequence is SRLLRSDFCPERAPSRQQKDKFLTE.

The protein resides in the cell membrane. In terms of biological role, regulates the composition and fluidity of the plasma membrane. Inhibits the incorporation of membrane-fluidizing phospholipids containing omega-3 long-chain polyunsaturated fatty acids (LCPUFA) and thereby promotes membrane rigidity. Does not appear to have any effect on LCPUFA synthesis. The polypeptide is TLC domain-containing protein 1 (Tlcd1) (Rattus norvegicus (Rat)).